Reading from the N-terminus, the 185-residue chain is Ribosome maturation factor RimP (185 aa).

Positions 162-185 (VRLERAADGAPERGGDRGDTEESR) are disordered.

Belongs to the RimP family.

It localises to the cytoplasm. Required for maturation of 30S ribosomal subunits. This Saccharopolyspora erythraea (strain ATCC 11635 / DSM 40517 / JCM 4748 / NBRC 13426 / NCIMB 8594 / NRRL 2338) protein is Ribosome maturation factor RimP.